The sequence spans 284 residues: Lipase chaperone (284 aa).

Residues 4–24 form a helical membrane-spanning segment; sequence IAWSLGILVTIGALCAIVWPS.

This sequence belongs to the lipase chaperone family.

The protein localises to the cell inner membrane. Its function is as follows. May be involved in the folding of the extracellular lipase during its passage through the periplasm. The protein is Lipase chaperone (lifO) of Vibrio cholerae serotype O1 (strain ATCC 39315 / El Tor Inaba N16961).